The sequence spans 754 residues: ToMV susceptible protein tm-1(GCR26) (754 aa).

An N-terminal inhibitory domain NN region spans residues 1 to 201 (MATAQSNSPR…AGMVIGRLES (201 aa)). ATP-binding positions include 18–20 (DTK), threonine 55, arginine 92, and 124–127 (GSGG). Positions 211 to 431 (KFTVGVTMFG…VDSFLEMSPK (221 aa)) are N-terminal inhibitory domain NC.

Belongs to the UPF0261 family. As to quaternary structure, homodimer. (Microbial infection) Binds, via an ATP bridge, to the tobamoviruses avirulent (Avr) replication proteins (large and small subunits, e.g. tobacco mild green mosaic virus (TMGMV) AC P18339 and pepper mild mottle virus (PMMoV) AC P89657) to inhibit their function after the translation of tobamoviruses RNA, but before the viral replication complex formation on the membrane surfaces; this interaction is not possible with resistance-breaking strains replication proteins.

In terms of biological role, inhibitor of viral RNA replication which confers resistance to some tobamoviruses including tobacco mild green mosaic virus (TMGMV) and pepper mild mottle virus (PMMoV), but not to tomato mosaic virus (ToMV strains L, ToMV0 and ToMV1-2) and tobacco mosaic virus (TMV). Prevents tobamoviruses RNA replication by affecting the association of tobamoviruses replication proteins (large and small subunits) with host membrane-associated proteins (e.g. TOM1, TOM2A and ARL8), thus inhibiting the replication complex formation on the membranes and avoiding viral negative-strand RNA synthesis. This Solanum lycopersicum (Tomato) protein is ToMV susceptible protein tm-1(GCR26).